Here is a 1031-residue protein sequence, read N- to C-terminus: Sister chromatid cohesion 1 protein 4 (1031 aa).

The tract at residues 461 to 481 is disordered; it reads TPDKEDPGTCNDDAGNNNITG. The short motif at 545 to 552 is the Nuclear localization signal element; that stretch reads TKRLRSAP. Disordered stretches follow at residues 661 to 703, 742 to 772, and 803 to 835; these read VEEN…EELK, EKLDRVEDLQVEESHENHDGEGGQDVCADPN, and ELPHEDEKTDASAEVSELGRDDQTPCDNTVGST. 2 stretches are compositionally biased toward basic and acidic residues: residues 742–762 and 803–825; these read EKLDRVEDLQVEESHENHDGE and ELPHEDEKTDASAEVSELGRDDQ.

Belongs to the rad21 family. As to quaternary structure, component of the cohesin complex. As to expression, expressed in tissues containing dividing cells such as seedlings, flower buds, flowers and inflorescence meristem tissue.

Its subcellular location is the nucleus. It is found in the chromosome. The protein resides in the centromere. Its function is as follows. Involved in sister chromatid and centromere cohesion during mitosis. This is Sister chromatid cohesion 1 protein 4 (SYN4) from Arabidopsis thaliana (Mouse-ear cress).